Consider the following 623-residue polypeptide: AFI1-like protein C776.06c (623 aa).

Residues 5–204 (DYLLTAIFDP…IDNIPKPGSE (200 aa)) enclose the uDENN domain. One can recognise a cDENN domain in the interval 248 to 386 (ISNLINTFID…SDATTTMDTK (139 aa)). Residues 388–476 (LFNNTSPFTP…WSWDNDDEKV (89 aa)) form the dDENN domain.

The protein belongs to the AFI1/mesA family.

It localises to the cytoplasm. The protein localises to the cell cortex. It is found in the nucleus. Its function is as follows. Involved in polarity establishment. This Schizosaccharomyces pombe (strain 972 / ATCC 24843) (Fission yeast) protein is AFI1-like protein C776.06c.